A 196-amino-acid polypeptide reads, in one-letter code: Large ribosomal subunit protein bL9 (196 aa).

It belongs to the bacterial ribosomal protein bL9 family.

In terms of biological role, binds to the 23S rRNA. The sequence is that of Large ribosomal subunit protein bL9 from Bradyrhizobium sp. (strain ORS 278).